A 417-amino-acid chain; its full sequence is MSLSNKLTLDKLDVKGKRVVMRVDFNVPMKNNQITNNQRIKAAVPSIKFCLDNGAKSVVLMSHLGRPDGVPMPDKYSLEPVAAELKSLLGKDVLFLKDCVGPEVENACANPAAGTVILLENLRFHVEEEGKGKDASGNKVKAEPAKIDAFRASLSKLGDVYVNDAFGTAHRAHSSMVGVNLPQKAGGFLMKKELNYFAKALESPERPFLAILGGAKVADKIQLINNMLDKVNEMIIGGGMAFTFLKVLNNMEIGTSLYDEEGAKIVKDLMSKAEKNGVKITLPVDFVTADKFDENAKTGQATVASGIPAGWMGLDCGTESSKKYAEAVGRAKQIVWNGPVGVFEWEAFARGTKSLMDEVVKATSRGCITIIGGGDTATCCAKWNTEDKVSHVSTGGGASLELLEGKVLPGVDALSNV.

Serine 2 carries the N-acetylserine modification. Phosphoserine is present on residues serine 2 and serine 4. Residue lysine 6 is modified to N6-succinyllysine. The residue at position 11 (lysine 11) is an N6-acetyllysine. The (2R)-3-phosphoglycerate site is built by valine 23, aspartate 24, phenylalanine 25, asparagine 26, glutamine 38, and arginine 39. Residues 38–43 form a mitochondrial targeting region exposed following cis-trans isomerization by PIN1 and recognized by the TOM complex for mitochondrial translocation of the protein region; that stretch reads QRIKAA. Lysine 48 is subject to N6-acetyllysine; alternate. Lysine 48 is modified (N6-succinyllysine; alternate). (2R)-3-phosphoglycerate contacts are provided by serine 62, histidine 63, glycine 65, and arginine 66. At lysine 75 the chain carries N6-acetyllysine. Tyrosine 76 bears the Phosphotyrosine mark. Lysine 86 and lysine 91 each carry N6-acetyllysine. Lysine 97 is subject to N6-acetyllysine; alternate. Lysine 97 bears the N6-(2-hydroxyisobutyryl)lysine; alternate mark. Residues leucine 122 and arginine 123 each contribute to the (2R)-3-phosphoglycerate site. Lysine 131 carries the N6-acetyllysine; alternate modification. Lysine 131 carries the post-translational modification N6-malonyllysine; alternate. Lysine 146 is modified (N6-acetyllysine). Residues histidine 170 and arginine 171 each coordinate (2R)-3-phosphoglycerate. Lysine 191 bears the N6-succinyllysine mark. At tyrosine 196 the chain carries Phosphotyrosine. Lysine 199 bears the N6-acetyllysine mark. Residue serine 203 is modified to Phosphoserine. Glycine 214 contacts ADP. Residue glycine 214 coordinates CDP. 2 residues coordinate AMP: alanine 215 and lysine 216. Alanine 215 lines the ATP pocket. Alanine 215 is a binding site for Mg(2+). Residue lysine 216 is modified to N6-(2-hydroxyisobutyryl)lysine. Positions 218 and 219 each coordinate Mg(2+). Aspartate 219 contacts CDP. Lysine 220 contributes to the AMP binding site. ATP is bound at residue lysine 220. The residue at position 220 (lysine 220) is an N6-(2-hydroxyisobutyryl)lysine. Residue glycine 238 coordinates ADP. A CDP-binding site is contributed by glycine 238. Glycine 239 contacts AMP. An ATP-binding site is contributed by glycine 239. 2 positions are modified to N6-acetyllysine: lysine 267 and lysine 291. Glycine 313 is an AMP binding site. Glycine 313 contacts ATP. N6-(2-hydroxyisobutyryl)lysine is present on lysine 323. Positions 338, 340, and 343 each coordinate CDP. Phenylalanine 343 provides a ligand contact to ADP. Glutamate 344 lines the AMP pocket. Glutamate 344 serves as a coordination point for ATP. Lysine 361 is subject to N6-acetyllysine. Residues aspartate 375 and threonine 376 each coordinate ATP. A Mg(2+)-binding site is contributed by aspartate 375.

Belongs to the phosphoglycerate kinase family. Monomer. Interacts with kinase MAPK1/ERK2; the interaction is direct, occurs under hypoxic conditions, and promotes its interaction with PIN1. Interacts with peptidyl-prolyl cis-trans isomerase PIN1; the interaction is direct, occurs under hypoxic conditions, and targets the protein to the mitochondrion by promoting interactions with the TOM complex. Interacts with mitochondrial circRNA mcPGK1 (via its 2nd stem-loop); the interaction is direct and targets the protein to the mitochondrion by promoting interactions with the TOM complex. Interacts with pyruvate dehydrogenase kinase PDK1; the interaction is direct, occurs under hypoxic conditions and leads to PDK1-mediated inhibition of pyruvate dehydrogenase complex activity. It depends on Mg(2+) as a cofactor. In terms of processing, phosphorylated at Ser-203 by MAPK1/ERK2 under hypoxic conditions, which promotes its mitochondrial targeting. Testis, lung, brain, skeletal muscle, liver, intestine, and kidney (at protein level).

It is found in the cytoplasm. The protein resides in the cytosol. It localises to the mitochondrion matrix. It catalyses the reaction (2R)-3-phosphoglycerate + ATP = (2R)-3-phospho-glyceroyl phosphate + ADP. The enzyme catalyses L-seryl-[protein] + ATP = O-phospho-L-seryl-[protein] + ADP + H(+). The protein operates within carbohydrate degradation; glycolysis; pyruvate from D-glyceraldehyde 3-phosphate: step 2/5. Functionally, catalyzes one of the two ATP producing reactions in the glycolytic pathway via the reversible conversion of 1,3-diphosphoglycerate to 3-phosphoglycerate. Both L- and D- forms of purine and pyrimidine nucleotides can be used as substrates, but the activity is much lower on pyrimidines. In addition to its role as a glycolytic enzyme, it seems that PGK-1 acts as a polymerase alpha cofactor protein (primer recognition protein). Acts as a protein kinase when localized to the mitochondrion where it phosphorylates pyruvate dehydrogenase kinase PDK1 to inhibit pyruvate dehydrogenase complex activity and suppress the formation of acetyl-coenzyme A from pyruvate, and consequently inhibit oxidative phosphorylation and promote glycolysis. May play a role in sperm motility. This is Phosphoglycerate kinase 1 (Pgk1) from Mus musculus (Mouse).